The primary structure comprises 278 residues: Sulfur carrier protein FdhD (278 aa).

Cys121 functions as the Cysteine persulfide intermediate in the catalytic mechanism. 260–265 (FCKPGR) provides a ligand contact to Mo-bis(molybdopterin guanine dinucleotide).

This sequence belongs to the FdhD family.

Its subcellular location is the cytoplasm. Functionally, required for formate dehydrogenase (FDH) activity. Acts as a sulfur carrier protein that transfers sulfur from IscS to the molybdenum cofactor prior to its insertion into FDH. This chain is Sulfur carrier protein FdhD, found in Salmonella schwarzengrund (strain CVM19633).